The sequence spans 35 residues: GGSVDSAAAEEVFESNCASCHGADLSGAGPDLTQV.

The heme c site is built by cysteine 17, cysteine 20, and histidine 21.

In terms of processing, binds 1 heme c group covalently per subunit.

In terms of biological role, monoheme cytochrome which functions as an electron carrier in the reduction of nitrite by membrane vesicles. This chain is Cytochrome c-550, found in Virgibacillus halodenitrificans (Bacillus halodenitrificans).